The following is a 101-amino-acid chain: Cilia- and flagella-associated protein 141 (101 aa).

Microtubule inner protein component of sperm flagellar doublet microtubules.

It localises to the cytoplasm. Its subcellular location is the cytoskeleton. It is found in the cilium axoneme. The protein resides in the flagellum axoneme. Its function is as follows. Microtubule inner protein (MIP) part of the dynein-decorated doublet microtubules (DMTs) in cilia axoneme, which is required for motile cilia beating. This chain is Cilia- and flagella-associated protein 141, found in Mus musculus (Mouse).